We begin with the raw amino-acid sequence, 245 residues long: 1-(5-phosphoribosyl)-5-[(5-phosphoribosylamino)methylideneamino] imidazole-4-carboxamide isomerase (245 aa).

The Proton acceptor role is filled by Asp-8. Asp-129 functions as the Proton donor in the catalytic mechanism.

The protein belongs to the HisA/HisF family.

The protein resides in the cytoplasm. The catalysed reaction is 1-(5-phospho-beta-D-ribosyl)-5-[(5-phospho-beta-D-ribosylamino)methylideneamino]imidazole-4-carboxamide = 5-[(5-phospho-1-deoxy-D-ribulos-1-ylimino)methylamino]-1-(5-phospho-beta-D-ribosyl)imidazole-4-carboxamide. It functions in the pathway amino-acid biosynthesis; L-histidine biosynthesis; L-histidine from 5-phospho-alpha-D-ribose 1-diphosphate: step 4/9. In Rhodopseudomonas palustris (strain BisB18), this protein is 1-(5-phosphoribosyl)-5-[(5-phosphoribosylamino)methylideneamino] imidazole-4-carboxamide isomerase.